Here is a 763-residue protein sequence, read N- to C-terminus: Protein CHROMATIN REMODELING 19 (763 aa).

2 disordered regions span residues Met-1 to Ile-43 and Glu-114 to Asp-149. Over residues Val-23–Arg-34 the composition is skewed to basic residues. Over residues Glu-114–Phe-135 the composition is skewed to acidic residues. Residues Leu-226–Asp-404 enclose the Helicase ATP-binding domain. Asp-239–Thr-246 provides a ligand contact to ATP. Residues Asp-353–His-356 carry the DEAH box motif. Residues Arg-462–Arg-482 are a coiled coil. Residues Ile-520–Glu-527 carry the Nuclear localization signal motif. The region spanning Thr-592–Val-742 is the Helicase C-terminal domain.

Belongs to the SNF2/RAD54 helicase family. Interacts with SUVR2 and itself.

The protein resides in the nucleus. In terms of biological role, DNA helicase that possesses intrinsic ATP-dependent nucleosome-remodeling activity and is both required for DNA repair and heterochromatin organization. Promotes DNA end resection of double-strand breaks (DSBs) following DNA damage: probably acts by weakening histone DNA interactions in nucleosomes flanking DSBs. Probable chromatin remodeling factor. Probable helicase-like transcription factor involved in transcriptional gene silencing. Associates with SUVR2 and contributes to transcriptional gene silencing at RNA-directed DNA methylation (RdDM) target loci but also at RdDM-independent target loci. May be involved in nucleosome positioning to form ordered nucleosome arrays on chromatin. This chain is Protein CHROMATIN REMODELING 19, found in Arabidopsis thaliana (Mouse-ear cress).